Consider the following 54-residue polypeptide: Large ribosomal subunit protein bL32c (54 aa).

Residues Met-1–Ala-25 show a composition bias toward basic residues. Residues Met-1 to Lys-26 are disordered.

The protein belongs to the bacterial ribosomal protein bL32 family.

Its subcellular location is the plastid. It is found in the chloroplast. The chain is Large ribosomal subunit protein bL32c from Thalassiosira pseudonana (Marine diatom).